Consider the following 388-residue polypeptide: Reducing end xylose-releasing exo-oligoxylanase (388 aa).

Residue glutamate 70 is the Proton donor of the active site. Aspartate 263 serves as the catalytic Proton acceptor.

Belongs to the glycosyl hydrolase 8 (cellulase D) family.

The catalysed reaction is Hydrolysis of (1-&gt;4)-beta-D-xylose residues from the reducing end of oligosaccharides.. In terms of biological role, hydrolyzes xylooligosaccharides with a degree of polymerization of greater than or equal to 3, releasing xylose from the reducing end. Only hydrolyzes the beta anomers of xylooligosaccharides, with inversion of anomeric configuration. Hydrolyzes the glucose and xylose-based trisaccharides where xylose is located at the -1 subsite, GXX, XXG and GXG. Does not hydrolyze xylan, chitosan, lichenan, curdlan or carboxymethylcellulose. The chain is Reducing end xylose-releasing exo-oligoxylanase from Halalkalibacterium halodurans (strain ATCC BAA-125 / DSM 18197 / FERM 7344 / JCM 9153 / C-125) (Bacillus halodurans).